Here is a 216-residue protein sequence, read N- to C-terminus: L-fuculose phosphate aldolase (216 aa).

Residues 28 to 29, 43 to 44, and 71 to 72 each bind substrate; these read GN, TG, and SS. Glutamate 73 acts as the Proton donor/acceptor in catalysis. Positions 73, 92, 94, and 155 each coordinate Zn(2+).

It belongs to the aldolase class II family. AraD/FucA subfamily. In terms of assembly, homotetramer. Zn(2+) is required as a cofactor.

The catalysed reaction is L-fuculose 1-phosphate = (S)-lactaldehyde + dihydroxyacetone phosphate. It functions in the pathway carbohydrate degradation; L-fucose degradation; L-lactaldehyde and glycerone phosphate from L-fucose: step 3/3. Its function is as follows. Involved in the degradation of L-fucose and D-arabinose. Catalyzes the reversible cleavage of L-fuculose 1-phosphate (Fuc1P) to yield dihydroxyacetone phosphate (DHAP) and L-lactaldehyde. This is L-fuculose phosphate aldolase from Haemophilus influenzae (strain ATCC 51907 / DSM 11121 / KW20 / Rd).